A 330-amino-acid chain; its full sequence is Bifunctional pinoresinol-lariciresinol reductase 2 (330 aa).

NADP(+) is bound by residues 28-34, Arg53, and Lys62; that span reads GGTGYLG. The active-site Proton acceptor is the Lys156. Arg160 is an NADP(+) binding site. His288 contributes to the substrate binding site.

Belongs to the NmrA-type oxidoreductase family. Isoflavone reductase subfamily. In terms of assembly, dimer. As to expression, expressed in leaves, stems, leaves and seeds.

It carries out the reaction (+)-lariciresinol + NADP(+) = (+)-pinoresinol + NADPH + H(+). The catalysed reaction is (-)-secoisolariciresinol + NADP(+) = (+)-lariciresinol + NADPH + H(+). In terms of biological role, reductase involved in lignan biosynthesis. Catalyzes the enantioselective conversion of (+)-pinoresinol into (+)-lariciresinol and of (+)-lariciresinol into (-)-secoisolariciresinol. Abstracts the 4R-hydride from the NADPH cofactor during catalysis. The chain is Bifunctional pinoresinol-lariciresinol reductase 2 (PLR_Lu2) from Linum usitatissimum (Flax).